The chain runs to 883 residues: MTTEHNEINMPTKYEPSNVEAGKYKWWLEKEFFKAEGNTDKEPYSIVIPPPNVTGKLHLGHAWDTTLQDIITRMKRMQGFDTLYLPGMDHAGIATQAKVEAKLKESNISRYDLGRENFVDKTWEWKEEYAEFIREQWEKLGLGLDYSRERFTLDDGLSDAVKKVFVTLYNKGLIYRGQYIINWDPEAKTALSDIEVIHKDIEGSFYHLKYPLTDGSGYLEVATTRPETIPGDTAVAVHPKDERYQHLIGKTIMLPILNREIPIVADEYVEREFGSGAVKITPAHDPNDFEVGNRHNLPRIIVMHEDGTMNENAGKYDGLDRFVARKEIIQDFKDLGLFIKQEPHLHSVGHSERTGAVVEPYLSLQWFVKMEPLAAEALELQKTENKVNFVPARFEKTYETWMDNIHDWCISRQLWWGHRIPAWYHKETGEIYVGEKEPENLSEWEQDEDVLDTWFSSALWPFSTMGWPDTESPDFQHFFPTNTLVTGYDIIFFWVSRMIFQSVEFTGERPFKDTLIHGLVRDSEGRKMSKSLGNGVDPIEVIDKYGADSLRYTLATGSSPGQDLKFSYEKVESTWNFINKIWNASRFVLMNLDGMKYNEIDLSNVTEVSDKWILTRLNETIQAVTSLGEKYEFGEVGRTLYNFIWDDFCDWYIEIAKIPLYGEDEVAKQTTRSVLAYTLNATMRLLHPFMPFVTEEIWQNLPHEGESITIAEWPKVNEQQIDTKSSTAMATLVEVIRAVRNIRSEVNTPLSKPIVLEIKPKDTTYKEILEQNISYIERFCNPEQVTISFDVEASKTAMTAVVSGAEIFIPLEALIDLNVEIARLEKELEKWNKEVARVQGKLNNERFISKAPESVVAEERLKEKDYLDKKASVLERIETLKEV.

The short motif at 51 to 61 (PNVTGKLHLGH) is the 'HIGH' region element. Positions 527 to 531 (KMSKS) match the 'KMSKS' region motif. ATP is bound at residue Lys530. Positions 811 to 847 (LEALIDLNVEIARLEKELEKWNKEVARVQGKLNNERF) form a coiled coil.

This sequence belongs to the class-I aminoacyl-tRNA synthetase family. ValS type 1 subfamily. Monomer.

It localises to the cytoplasm. It catalyses the reaction tRNA(Val) + L-valine + ATP = L-valyl-tRNA(Val) + AMP + diphosphate. In terms of biological role, catalyzes the attachment of valine to tRNA(Val). As ValRS can inadvertently accommodate and process structurally similar amino acids such as threonine, to avoid such errors, it has a 'posttransfer' editing activity that hydrolyzes mischarged Thr-tRNA(Val) in a tRNA-dependent manner. This chain is Valine--tRNA ligase, found in Listeria monocytogenes serovar 1/2a (strain ATCC BAA-679 / EGD-e).